Here is a 500-residue protein sequence, read N- to C-terminus: Na(+)/H(+) antiporter NhaB (500 aa).

The next 11 membrane-spanning stretches (helical) occupy residues 23 to 43 (VVIC…GPVA), 53 to 73 (IFTL…LLLI), 96 to 116 (VILL…LLLF), 129 to 149 (AILA…LDAL), 150 to 170 (TVTA…HRVA), 205 to 225 (LLMH…VGEP), 238 to 258 (FVDF…AGLV), 311 to 331 (ILII…LMVI), 350 to 370 (FQDA…VAVI), 450 to 470 (ATPN…APLI), and 477 to 497 (MVWM…WAVT).

It belongs to the NhaB Na(+)/H(+) (TC 2.A.34) antiporter family.

Its subcellular location is the cell inner membrane. It catalyses the reaction 2 Na(+)(in) + 3 H(+)(out) = 2 Na(+)(out) + 3 H(+)(in). Na(+)/H(+) antiporter that extrudes sodium in exchange for external protons. This is Na(+)/H(+) antiporter NhaB from Pseudomonas putida (strain ATCC 47054 / DSM 6125 / CFBP 8728 / NCIMB 11950 / KT2440).